An 860-amino-acid chain; its full sequence is Late endosome and vacuole interface protein 11 (860 aa).

Residues 19-45 form a disordered region; the sequence is EIINNSDHSSSHSTSHEEEDEEEDDTE. The segment covering 20 to 31 has biased composition (low complexity); that stretch reads IINNSDHSSSHS. The span at 35 to 45 shows a compositional bias: acidic residues; it reads EEEDEEEDDTE. A BED-type zinc finger spans residues 84–138; sequence KNIAKFWSHFLAIEKKLTKVKCKHCGEILTRSDASLTKTFRSHLKTKHNISANKN. Residues Cys105, Cys108, His126, and His131 each coordinate Zn(2+).

The protein belongs to the VID22 family.

It localises to the nucleus. Involved in vacuolar processing and morphology. The polypeptide is Late endosome and vacuole interface protein 11 (ENV11) (Saccharomyces cerevisiae (strain ATCC 204508 / S288c) (Baker's yeast)).